We begin with the raw amino-acid sequence, 818 residues long: Glycogen phosphorylase (818 aa).

At Lys667 the chain carries N6-(pyridoxal phosphate)lysine.

The protein belongs to the glycogen phosphorylase family. It depends on pyridoxal 5'-phosphate as a cofactor.

It carries out the reaction [(1-&gt;4)-alpha-D-glucosyl](n) + phosphate = [(1-&gt;4)-alpha-D-glucosyl](n-1) + alpha-D-glucose 1-phosphate. Phosphorylase is an important allosteric enzyme in carbohydrate metabolism. Enzymes from different sources differ in their regulatory mechanisms and in their natural substrates. However, all known phosphorylases share catalytic and structural properties. The sequence is that of Glycogen phosphorylase (glgP) from Pasteurella multocida (strain Pm70).